The following is a 767-amino-acid chain: Photosystem I P700 chlorophyll a apoprotein A1 (767 aa).

Transmembrane regions (helical) follow at residues 72-95 (IFSA…FHGA), 158-181 (LMSL…FHYH), 197-221 (LNHH…HVSL), 305-323 (IAHH…GHMY), 364-387 (WHAQ…QHMY), 403-429 (IGLF…IAMI), 451-473 (AIIS…LYVH), and 548-566 (FMVH…LILL). 2 residues coordinate [4Fe-4S] cluster: Cys590 and Cys599. 2 helical membrane passes run 606–627 (HVFL…HFSW) and 681–703 (TSAY…MFLF). Residue His692 coordinates chlorophyll a'. The chlorophyll a site is built by Met700 and Tyr708. Trp709 is a binding site for phylloquinone. Residues 741-761 (AVGVAHYLLGGIATTWAFFHA) traverse the membrane as a helical segment.

Belongs to the PsaA/PsaB family. As to quaternary structure, the PsaA/B heterodimer binds the P700 chlorophyll special pair and subsequent electron acceptors. PSI consists of a core antenna complex that captures photons, and an electron transfer chain that converts photonic excitation into a charge separation. The cyanobacterial PSI reaction center is composed of one copy each of PsaA,B,C,D,E,F,I,J,K,L,M and X, and forms trimeric complexes. The cofactor is PSI electron transfer chain: 5 chlorophyll a, 1 chlorophyll a', 2 phylloquinones and 3 4Fe-4S clusters. PSI core antenna: 90 chlorophyll a, 22 carotenoids, 3 phospholipids and 1 galactolipid. P700 is a chlorophyll a/chlorophyll a' dimer, A0 is one or more chlorophyll a, A1 is one or both phylloquinones and FX is a shared 4Fe-4S iron-sulfur center..

It localises to the cellular thylakoid membrane. The enzyme catalyses reduced [plastocyanin] + hnu + oxidized [2Fe-2S]-[ferredoxin] = oxidized [plastocyanin] + reduced [2Fe-2S]-[ferredoxin]. Functionally, psaA and PsaB bind P700, the primary electron donor of photosystem I (PSI), as well as the electron acceptors A0, A1 and FX. PSI is a plastocyanin/cytochrome c6-ferredoxin oxidoreductase, converting photonic excitation into a charge separation, which transfers an electron from the donor P700 chlorophyll pair to the spectroscopically characterized acceptors A0, A1, FX, FA and FB in turn. Oxidized P700 is reduced on the lumenal side of the thylakoid membrane by plastocyanin or cytochrome c6. The chain is Photosystem I P700 chlorophyll a apoprotein A1 from Synechococcus sp. (strain CC9311).